Reading from the N-terminus, the 448-residue chain is Signal recognition particle 54 kDa protein (448 aa).

GTP is bound by residues 107–114 (GIQGSGKT), 189–193 (DSAGR), and 247–250 (TKLD).

Belongs to the GTP-binding SRP family. SRP54 subfamily. In terms of assembly, part of the signal recognition particle protein translocation system, which is composed of SRP and FtsY. Archaeal SRP consists of a 7S RNA molecule of 300 nucleotides and two protein subunits: SRP54 and SRP19.

It localises to the cytoplasm. The catalysed reaction is GTP + H2O = GDP + phosphate + H(+). In terms of biological role, involved in targeting and insertion of nascent membrane proteins into the cytoplasmic membrane. Binds to the hydrophobic signal sequence of the ribosome-nascent chain (RNC) as it emerges from the ribosomes. The SRP-RNC complex is then targeted to the cytoplasmic membrane where it interacts with the SRP receptor FtsY. This Thermococcus kodakarensis (strain ATCC BAA-918 / JCM 12380 / KOD1) (Pyrococcus kodakaraensis (strain KOD1)) protein is Signal recognition particle 54 kDa protein.